Reading from the N-terminus, the 418-residue chain is Centromere protein U (418 aa).

The span at 1–11 shows a compositional bias: basic residues; the sequence is MAPRGRRRPRP. The segment at 1–76 is disordered; it reads MAPRGRRRPR…TYETFDPPLH (76 aa). The short motif at 6 to 23 is the Nuclear localization signal element; that stretch reads RRRPRPHRSEGARRSKNT. Over residues 12 to 42 the composition is skewed to basic and acidic residues; the sequence is HRSEGARRSKNTLERTHSMKDKAGQKCKPID. Threonine 78 is subject to Phosphothreonine; by PLK1. A disordered region spans residues 88-227; that stretch reads SKHCGLSLSS…KRKKSRSKAI (140 aa). Position 98 is a phosphothreonine (threonine 98). Serine 108 bears the Phosphoserine mark. A Phosphothreonine modification is found at threonine 110. A phosphoserine mark is found at serine 111, serine 116, and serine 120. The span at 124–133 shows a compositional bias: basic residues; sequence SAKKPGRKLR. A phosphoserine mark is found at serine 136, serine 139, and serine 141. A compositionally biased stretch (basic and acidic residues) spans 145-165; sequence SDTRRKVKSAEKISTQRHEVI. The segment covering 180–193 has biased composition (polar residues); that stretch reads SVTSKKTGPLSAQP. A Glycyl lysine isopeptide (Lys-Gly) (interchain with G-Cter in SUMO2) cross-link involves residue lysine 185. Serine 190 and serine 194 each carry phosphoserine. The segment covering 208–224 has biased composition (basic residues); it reads TQKKGKISHDKRKKSRS. Serine 232 carries the post-translational modification Phosphoserine. Coiled coils occupy residues 297–356 and 397–417; these read QMLT…NAAY and LLGA…LLDQ. A Nuclear localization signal motif is present at residues 303-320; sequence KRKNAKMISDIEKKRQRM.

It belongs to the CENP-U/AME1 family. As to quaternary structure, component of the CENPA-NAC complex, at least composed of CENPA, CENPC, CENPH, CENPM, CENPN, CENPT and CENPU. The CENPA-NAC complex interacts with the CENPA-CAD complex, composed of CENPI, CENPK, CENPL, CENPO, CENPP, CENPQ, CENPR and CENPS. Interacts with MLF1. Interacts with PLK1. In terms of assembly, (Microbial infection) Interacts with the N-terminal domain of Kaposi's sarcoma-associated herpesvirus latent nuclear antigen (LNA). Phosphorylated by PLK1 at Thr-78, creating a self-tethering site that specifically interacts with the polo-box domain of PLK1. In terms of tissue distribution, expressed at high levels in the testis, fetal liver, thymus, bone marrow and at lower levels in the lymph nodes, placenta, colon and spleen. Present in all cell lines examined, including B-cells, T-cells, epithelial cells and fibroblast cells. Expressed at high levels in glioblastoma cell lines.

The protein resides in the cytoplasm. It localises to the nucleus. The protein localises to the chromosome. Its subcellular location is the centromere. It is found in the kinetochore. In terms of biological role, component of the CENPA-NAC (nucleosome-associated) complex, a complex that plays a central role in assembly of kinetochore proteins, mitotic progression and chromosome segregation. The CENPA-NAC complex recruits the CENPA-CAD (nucleosome distal) complex and may be involved in incorporation of newly synthesized CENPA into centromeres. Plays an important role in the correct PLK1 localization to the mitotic kinetochores. A scaffold protein responsible for the initial recruitment and maintenance of the kinetochore PLK1 population until its degradation. Involved in transcriptional repression. This is Centromere protein U (CENPU) from Homo sapiens (Human).